We begin with the raw amino-acid sequence, 425 residues long: Aromatic prenyl transferase PC-22 (425 aa).

L-tryptophan is bound by residues 83-84 and glutamate 92; that span reads GI. Arginine 107, lysine 198, tyrosine 200, arginine 265, lysine 267, tyrosine 269, tyrosine 345, tyrosine 410, and tyrosine 414 together coordinate substrate.

This sequence belongs to the tryptophan dimethylallyltransferase family. As to quaternary structure, homodimer.

It functions in the pathway secondary metabolite biosynthesis. Aromatic prenyl transferase; part of the gene cluster that mediates the biosynthesis of the indole diterpenes penitrems. The geranylgeranyl diphosphate (GGPP) synthase penG catalyzes the first step in penitrem biosynthesis via conversion of farnesyl pyrophosphate and isopentyl pyrophosphate into geranylgeranyl pyrophosphate (GGPP). Condensation of indole-3-glycerol phosphate with GGPP by the prenyl transferase penC then forms 3-geranylgeranylindole (3-GGI). Epoxidation by the FAD-dependent monooxygenase penM leads to a epoxidized-GGI that is substrate of the terpene cyclase penB for cyclization to yield paspaline. Paspaline is subsequently converted to 13-desoxypaxilline by the cytochrome P450 monooxygenase penP, the latter being then converted to paxilline by the cytochrome P450 monooxygenase penQ. Paxilline is converted to beta-paxitriol via C-10 ketoreduction by the short-chain dehydrogenase PC-15 which can be monoprenylated at the C-20 by the indole diterpene prenyltransferase penD. A two-step elimination (acetylation and elimination) process performed by the O-acetyltransferase PC-16 and the P.simplicissimum ptmI-ortholog not yet identified in P.crustosum, leads to the production of the prenylated form of penijanthine. The FAD-linked oxidoreductase ptmO then converts the prenylated form of penijanthine into PC-M5 which is in turn transformed into PC-M4 by the aromatic dimethylallyltransferase PC-22. A series of oxidation steps involving 4 cytochrome P450 monooxygenases (PC-21, PC-05, PC-23, PC-20) and a FAD-dependent monooxygenase (PC-14) are required for the transformation of PC-M4 to penitrems A and E. Synthesis of these final products is proposed to proceed via penitrems D and C (PC-21, PC-05, PC-14) and penitrems B and F (PC-21, PC-05, PC-14, PC-23). The protein is Aromatic prenyl transferase PC-22 of Penicillium crustosum (Blue mold fungus).